The primary structure comprises 676 residues: RNA helicase NPH-II (676 aa).

In terms of domain architecture, Helicase ATP-binding spans F172–H347. An ATP-binding site is contributed by G185–T192. The DEXH box motif lies at D296 to H299. Residues N366–N535 enclose the Helicase C-terminal domain.

This sequence belongs to the DEAD box helicase family. DEAH subfamily. As to quaternary structure, monomer.

It localises to the virion. The catalysed reaction is ATP + H2O = ADP + phosphate + H(+). NTP-dependent helicase that catalyzes unidirectional unwinding of 3'tailed duplex RNAs and plays an important role during transcription of early mRNAs, presumably by preventing R-loop formation behind the elongating RNA polymerase. Might also play a role in the export of newly synthesized mRNA chains out of the core into the cytoplasm. Required for replication and propagation of viral particles. The polypeptide is RNA helicase NPH-II (OPG084) (Vaccinia virus (strain Copenhagen) (VACV)).